Here is a 720-residue protein sequence, read N- to C-terminus: Chloroplastic group IIA intron splicing facilitator CRS1, chloroplastic (720 aa).

A chloroplast-targeting transit peptide spans Met-1–Ser-77. Positions Lys-131–Glu-159 form a coiled coil. CRM domains are found at residues Leu-205–Asp-301 and Ala-359–Asp-456. 2 coiled-coil regions span residues Lys-447 to Glu-477 and Arg-517 to Leu-553. Residues Glu-570–Leu-670 form the CRM 3 domain.

In terms of assembly, homodimer. Interacts with RNA. Part of large ribonucleo-protein complexes that include group IIA introns and CRS1.

It localises to the plastid. Its subcellular location is the chloroplast stroma. Required for the splicing of group IIA introns in chloroplasts, by regulating the intron folding. Forms splicing particles with RNA. May also be involved in chloroplast protein translation. This is Chloroplastic group IIA intron splicing facilitator CRS1, chloroplastic from Arabidopsis thaliana (Mouse-ear cress).